A 355-amino-acid chain; its full sequence is Thiamine thiazole synthase, chloroplastic (355 aa).

A chloroplast-targeting transit peptide spans 1–42 (MAAMATTASSLLKTSFAGARLPAAARNPTVSVAPRTGGAICN). Substrate contacts are provided by residues A96, 116–117 (EQ), G124, and V189. A 2,3-didehydroalanine (Cys) modification is found at C218. Substrate contacts are provided by residues D220, H235, M287, and 297 to 299 (RMG).

It belongs to the THI4 family. As to quaternary structure, homooctamer. Requires Fe cation as cofactor. Post-translationally, during the catalytic reaction, a sulfide is transferred from Cys-218 to a reaction intermediate, generating a dehydroalanine residue.

It localises to the plastid. The protein localises to the chloroplast. It catalyses the reaction [ADP-thiazole synthase]-L-cysteine + glycine + NAD(+) = [ADP-thiazole synthase]-dehydroalanine + ADP-5-ethyl-4-methylthiazole-2-carboxylate + nicotinamide + 3 H2O + 2 H(+). Involved in biosynthesis of the thiamine precursor thiazole. Catalyzes the conversion of NAD and glycine to adenosine diphosphate 5-(2-hydroxyethyl)-4-methylthiazole-2-carboxylic acid (ADT), an adenylated thiazole intermediate. The reaction includes an iron-dependent sulfide transfer from a conserved cysteine residue of the protein to a thiazole intermediate. The enzyme can only undergo a single turnover, which suggests it is a suicide enzyme. May have additional roles in adaptation to various stress conditions and in DNA damage tolerance. Required fot thiamine accumulation and disease resistance toward the bacterial pathogen Xanthomonas oryzae pv oryzae (Xoo) and the fungal pathogen Magnaporthe oryzae. During infection by Xoo, functions positively in the defense pathway initiated by the resistance genes XA3 and XA26 by promoting thiamine synthesis. May function upstream of the defense-related proteins peroxidases, phenylalanine ammonia-lyases and pathogenesis-related proteins. Its function is as follows. (Microbial infection) During infection by Xanthomonas oryzae pv oryzae (Xoo), THI1 interacts with the type III effector virulence factor xadA from Xoo, which is an adhesin-like outer membrane protein. This probably attenuates the function of THI1 in defense response. This Oryza sativa subsp. japonica (Rice) protein is Thiamine thiazole synthase, chloroplastic.